A 185-amino-acid chain; its full sequence is Tetrahydromethanopterin S-methyltransferase subunit A 2 (185 aa).

Residues 1–21 lie on the Cytoplasmic side of the membrane; it reads MVDKKVDKKPVPEDWPHIVGD. A helical transmembrane segment spans residues 22–38; it reads YVVGDAESPVAVVTLGS. Residues 39–185 lie on the Extracellular side of the membrane; that stretch reads HMEDEPVRAG…LNKNKPDENT (147 aa). H88 provides a ligand contact to 5-hydroxybenzimidazolylcob(I)amide.

The protein belongs to the MtrA family. The complex is composed of 8 subunits; MtrA, MtrB, MtrC, MtrD, MtrE, MtrF, MtrG and MtrH. 5-hydroxybenzimidazolylcob(I)amide serves as cofactor.

It is found in the cell membrane. It catalyses the reaction 5-methyl-5,6,7,8-tetrahydromethanopterin + coenzyme M + 2 Na(+)(in) = 5,6,7,8-tetrahydromethanopterin + methyl-coenzyme M + 2 Na(+)(out). The protein operates within one-carbon metabolism; methanogenesis from CO(2); methyl-coenzyme M from 5,10-methylene-5,6,7,8-tetrahydromethanopterin: step 2/2. In terms of biological role, part of a complex that catalyzes the formation of methyl-coenzyme M and tetrahydromethanopterin from coenzyme M and methyl-tetrahydromethanopterin. This is an energy-conserving, sodium-ion translocating step. In Methanothermobacter marburgensis (strain ATCC BAA-927 / DSM 2133 / JCM 14651 / NBRC 100331 / OCM 82 / Marburg) (Methanobacterium thermoautotrophicum), this protein is Tetrahydromethanopterin S-methyltransferase subunit A 2.